We begin with the raw amino-acid sequence, 201 residues long: Cytochrome c oxidase assembly protein CtaG (201 aa).

The Cytoplasmic segment spans residues 1–13 (MTDQGENEKKQRR). The helical; Signal-anchor for type II membrane protein transmembrane segment at 14-36 (SNATIAVACLSFFVCMIGAAYAS) threads the bilayer. Topologically, residues 37-201 (VPLYRIFCQV…KAVGSTRNGG (165 aa)) are periplasmic.

The protein belongs to the COX11/CtaG family.

Its subcellular location is the cell inner membrane. In terms of biological role, exerts its effect at some terminal stage of cytochrome c oxidase synthesis, probably by being involved in the insertion of the copper B into subunit I. This chain is Cytochrome c oxidase assembly protein CtaG, found in Brucella ovis (strain ATCC 25840 / 63/290 / NCTC 10512).